The sequence spans 100 residues: UPF0213 protein YhbQ (100 aa).

A GIY-YIG domain is found at 2 to 77; it reads TPWFLYLIRT…KQLTKRQKER (76 aa).

The protein belongs to the UPF0213 family.

This chain is UPF0213 protein YhbQ, found in Shigella dysenteriae serotype 1 (strain Sd197).